We begin with the raw amino-acid sequence, 172 residues long: Large ribosomal subunit protein uL10 (172 aa).

The protein belongs to the universal ribosomal protein uL10 family. In terms of assembly, part of the ribosomal stalk of the 50S ribosomal subunit. The N-terminus interacts with L11 and the large rRNA to form the base of the stalk. The C-terminus forms an elongated spine to which L12 dimers bind in a sequential fashion forming a multimeric L10(L12)X complex.

Functionally, forms part of the ribosomal stalk, playing a central role in the interaction of the ribosome with GTP-bound translation factors. This chain is Large ribosomal subunit protein uL10 (rplJ), found in Brucella abortus biovar 1 (strain 9-941).